A 287-amino-acid polypeptide reads, in one-letter code: Putative sugar uptake protein M6_Spy1874 (287 aa).

10 consecutive transmembrane segments (helical) span residues isoleucine 4–glycine 26, leucine 33–valine 50, threonine 55–glycine 72, valine 85–valine 107, phenylalanine 117–serine 134, phenylalanine 154–phenylalanine 171, serine 181–phenylalanine 200, tyrosine 207–alanine 229, leucine 234–leucine 256, and valine 268–valine 285.

The protein belongs to the GRP transporter (TC 2.A.7.5) family.

Its subcellular location is the cell membrane. The sequence is that of Putative sugar uptake protein M6_Spy1874 from Streptococcus pyogenes serotype M6 (strain ATCC BAA-946 / MGAS10394).